Consider the following 253-residue polypeptide: Uridylate kinase (253 aa).

An ATP-binding site is contributed by 9–12 (KLSG). Glycine 51 serves as a coordination point for UMP. Residues glycine 52 and arginine 56 each contribute to the ATP site. UMP is bound by residues aspartate 72 and 133–140 (SGNPFFTT). ATP is bound by residues threonine 160, tyrosine 166, and aspartate 169.

This sequence belongs to the UMP kinase family. In terms of assembly, homohexamer.

Its subcellular location is the cytoplasm. It catalyses the reaction UMP + ATP = UDP + ADP. It participates in pyrimidine metabolism; CTP biosynthesis via de novo pathway; UDP from UMP (UMPK route): step 1/1. With respect to regulation, inhibited by UTP. In terms of biological role, catalyzes the reversible phosphorylation of UMP to UDP. This Synechococcus sp. (strain JA-2-3B'a(2-13)) (Cyanobacteria bacterium Yellowstone B-Prime) protein is Uridylate kinase.